We begin with the raw amino-acid sequence, 718 residues long: Phenylalanine--tRNA ligase beta subunit (718 aa).

One can recognise a tRNA-binding domain in the interval 39–153 (LNEISGIKFG…IFDLESNPLK (115 aa)). One can recognise a B5 domain in the interval 386 to 460 (SKKTFLDLNY…RFYGLEKLKD (75 aa)). Positions 438, 444, and 448 each coordinate Mg(2+).

It belongs to the phenylalanyl-tRNA synthetase beta subunit family. Type 1 subfamily. As to quaternary structure, tetramer of two alpha and two beta subunits. Requires Mg(2+) as cofactor.

The protein resides in the cytoplasm. The enzyme catalyses tRNA(Phe) + L-phenylalanine + ATP = L-phenylalanyl-tRNA(Phe) + AMP + diphosphate + H(+). The sequence is that of Phenylalanine--tRNA ligase beta subunit from Mesomycoplasma hyopneumoniae (strain J / ATCC 25934 / NCTC 10110) (Mycoplasma hyopneumoniae).